Consider the following 123-residue polypeptide: Large ribosomal subunit protein bL12 (123 aa).

A disordered region spans residues 96–123 (NVKEGVSKEEAEGLKKSLEEAGATVELK). Residues 100 to 114 (GVSKEEAEGLKKSLE) show a composition bias toward basic and acidic residues.

It belongs to the bacterial ribosomal protein bL12 family. In terms of assembly, homodimer. Part of the ribosomal stalk of the 50S ribosomal subunit. Forms a multimeric L10(L12)X complex, where L10 forms an elongated spine to which 2 to 4 L12 dimers bind in a sequential fashion. Binds GTP-bound translation factors.

In terms of biological role, forms part of the ribosomal stalk which helps the ribosome interact with GTP-bound translation factors. Is thus essential for accurate translation. This chain is Large ribosomal subunit protein bL12, found in Flavobacterium johnsoniae (strain ATCC 17061 / DSM 2064 / JCM 8514 / BCRC 14874 / CCUG 350202 / NBRC 14942 / NCIMB 11054 / UW101) (Cytophaga johnsonae).